We begin with the raw amino-acid sequence, 905 residues long: Isoleucine--tRNA ligase (905 aa).

The 'HIGH' region signature appears at Pro56–Thr66. L-isoleucyl-5'-AMP is bound at residue Glu563. Positions Lys604–Ser608 match the 'KMSKS' region motif. Lys607 provides a ligand contact to ATP.

It belongs to the class-I aminoacyl-tRNA synthetase family. IleS type 1 subfamily. Monomer.

Its subcellular location is the cytoplasm. It catalyses the reaction tRNA(Ile) + L-isoleucine + ATP = L-isoleucyl-tRNA(Ile) + AMP + diphosphate. Functionally, catalyzes the attachment of isoleucine to tRNA(Ile). As IleRS can inadvertently accommodate and process structurally similar amino acids such as valine, to avoid such errors it has two additional distinct tRNA(Ile)-dependent editing activities. One activity is designated as 'pretransfer' editing and involves the hydrolysis of activated Val-AMP. The other activity is designated 'posttransfer' editing and involves deacylation of mischarged Val-tRNA(Ile). This Pelagibacter ubique (strain HTCC1062) protein is Isoleucine--tRNA ligase.